Reading from the N-terminus, the 1299-residue chain is DNA-directed RNA polymerase subunit beta' (1299 aa).

Zn(2+) is bound by residues Cys60, Cys62, Cys75, and Cys78. The interval 385–405 (GRRGRPVTGPGNRPLKSLSDM) is disordered. Asp535, Asp537, and Asp539 together coordinate Mg(2+). The Zn(2+) site is built by Cys886, Cys962, Cys969, and Cys972.

The protein belongs to the RNA polymerase beta' chain family. The RNAP catalytic core consists of 2 alpha, 1 beta, 1 beta' and 1 omega subunit. When a sigma factor is associated with the core the holoenzyme is formed, which can initiate transcription. Mg(2+) is required as a cofactor. Zn(2+) serves as cofactor.

It carries out the reaction RNA(n) + a ribonucleoside 5'-triphosphate = RNA(n+1) + diphosphate. In terms of biological role, DNA-dependent RNA polymerase catalyzes the transcription of DNA into RNA using the four ribonucleoside triphosphates as substrates. The polypeptide is DNA-directed RNA polymerase subunit beta' (Streptomyces coelicolor (strain ATCC BAA-471 / A3(2) / M145)).